Reading from the N-terminus, the 426-residue chain is Glutamate-1-semialdehyde 2,1-aminomutase (426 aa).

N6-(pyridoxal phosphate)lysine is present on Lys265.

This sequence belongs to the class-III pyridoxal-phosphate-dependent aminotransferase family. HemL subfamily. As to quaternary structure, homodimer. The cofactor is pyridoxal 5'-phosphate.

The protein localises to the cytoplasm. It catalyses the reaction (S)-4-amino-5-oxopentanoate = 5-aminolevulinate. Its pathway is porphyrin-containing compound metabolism; protoporphyrin-IX biosynthesis; 5-aminolevulinate from L-glutamyl-tRNA(Glu): step 2/2. The polypeptide is Glutamate-1-semialdehyde 2,1-aminomutase (Escherichia coli O157:H7).